Here is a 192-residue protein sequence, read N- to C-terminus: 7-methyl-GTP pyrophosphatase (192 aa).

Asp69 (proton acceptor) is an active-site residue.

Belongs to the Maf family. YceF subfamily. Requires a divalent metal cation as cofactor.

It is found in the cytoplasm. The enzyme catalyses N(7)-methyl-GTP + H2O = N(7)-methyl-GMP + diphosphate + H(+). Functionally, nucleoside triphosphate pyrophosphatase that hydrolyzes 7-methyl-GTP (m(7)GTP). May have a dual role in cell division arrest and in preventing the incorporation of modified nucleotides into cellular nucleic acids. This Methylobacillus flagellatus (strain ATCC 51484 / DSM 6875 / VKM B-1610 / KT) protein is 7-methyl-GTP pyrophosphatase.